The sequence spans 676 residues: Electrogenic aspartate/glutamate antiporter SLC25A12, mitochondrial (676 aa).

Alanine 2 is subject to N-acetylalanine. The segment at 2–293 (AVKVHTTKRG…TLADIERIAP (292 aa)) is regulatory N-terminal domain. The Mitochondrial intermembrane portion of the chain corresponds to 2–328 (AVKVHTTKRG…WLQIAESAYR (327 aa)). Ca(2+) contacts are provided by aspartate 65, threonine 67, aspartate 69, leucine 71, and glutamate 76. EF-hand domains lie at 65 to 76 (DQTKDGLISYQE), 86 to 121 (APDSMFIVAFQLFDKSGNGEVTFENVKEIFGQTIIH), 125 to 155 (PFNWDCEFIRLHFGHNRKKHLNYVEFTQFLQ), and 157 to 192 (LQLEHARQAFALKDKSKSGMISGLDFSDVMVTIRSH). The linker loop domain stretch occupies residues 294–309 (LAEGALPYNLAELQRQ). A carrier domain region spans residues 319-611 (WLQIAESAYR…RWFYIDFGGL (293 aa)). Solcar repeat units lie at residues 323-415 (AESA…VRDK), 423-507 (IPLP…CKLL), and 515-603 (VGGI…LQRW). The chain crosses the membrane as a helical span at residues 329–346 (FTLGSVAGAVGATAVYPI). Residues 347–389 (DLVKTRMQNQRGTGSVVGELMYKNSFDCFKKVLRYEGFFGLYR) lie on the Mitochondrial matrix side of the membrane. Residues 390–409 (GLIPQLIGVAPEKAIKLTVN) traverse the membrane as a helical segment. Over 410–432 (DFVRDKFTRRDGSIPLPAEILAG) the chain is Mitochondrial intermembrane. Residues 433-446 (GCAGGSQVIFTNPL) traverse the membrane as a helical segment. At 447–481 (EIVKIRLQVAGEITTGPRVSALNVLQDLGLFGLYK) the chain is on the mitochondrial matrix side. The helical transmembrane segment at 482-501 (GAKACFLRDIPFSAIYFPVY) threads the bilayer. At 502 to 520 (AHCKLLLADENGHVGGINL) the chain is on the mitochondrial intermembrane side. The chain crosses the membrane as a helical span at residues 521 to 538 (LTAGAMAGVPAASLVTPA). Topologically, residues 539–577 (DVIKTRLQVAARAGQTTYSGVIDCFRKILREEGPSAFWK) are mitochondrial matrix. Residues 578 to 597 (GTAARVFRSSPQFGVTLVTY) traverse the membrane as a helical segment. At 598 to 676 (ELLQRWFYID…AQPKVAAAAQ (79 aa)) the chain is on the mitochondrial intermembrane side. The C-terminal domain stretch occupies residues 612–674 (KPSGSEPTPK…AAAQPKVAAA (63 aa)).

The protein belongs to the mitochondrial carrier (TC 2.A.29) family. In terms of assembly, homodimer (via N-terminus).

It localises to the mitochondrion inner membrane. It carries out the reaction L-aspartate(in) + L-glutamate(out) + H(+)(out) = L-aspartate(out) + L-glutamate(in) + H(+)(in). The enzyme catalyses 3-sulfino-L-alanine(out) + L-glutamate(in) + H(+)(in) = 3-sulfino-L-alanine(in) + L-glutamate(out) + H(+)(out). It catalyses the reaction 3-sulfino-L-alanine(out) + L-aspartate(in) = 3-sulfino-L-alanine(in) + L-aspartate(out). L-aspartate and 3-sulfino-L-alanine uptake are both inhibited by glisoxepide. Functionally, mitochondrial electrogenic aspartate/glutamate antiporter that favors efflux of aspartate and entry of glutamate and proton within the mitochondria as part of the malate-aspartate shuttle. Also mediates the uptake of L-cysteinesulfinate (3-sulfino-L-alanine) by mitochondria in exchange of L-glutamate and proton. Can also exchange L-cysteinesulfinate with aspartate in their anionic form without any proton translocation. Lacks transport activity towards L-glutamine or gamma-aminobutyric acid (GABA). This Rattus norvegicus (Rat) protein is Electrogenic aspartate/glutamate antiporter SLC25A12, mitochondrial.